The chain runs to 60 residues: Large ribosomal subunit protein bL32 (60 aa).

The segment covering 1-16 has biased composition (basic residues); sequence MAVPKRKTTPSKRGMR. Positions 1 to 60 are disordered; the sequence is MAVPKRKTTPSKRGMRRSADALKQPAYVENPDSGELHRPHHVDLKSGMYRGKQILKPKGE. The span at 34 to 44 shows a compositional bias: basic and acidic residues; the sequence is GELHRPHHVDL.

This sequence belongs to the bacterial ribosomal protein bL32 family.

This Parvibaculum lavamentivorans (strain DS-1 / DSM 13023 / NCIMB 13966) protein is Large ribosomal subunit protein bL32.